The chain runs to 789 residues: Molybdenum cofactor sulfurase (789 aa).

N6-(pyridoxal phosphate)lysine is present on lysine 251. Residue cysteine 422 is part of the active site. In terms of domain architecture, MOSC spans 628 to 789 (GDQVAQWLDQ…LICGETLEVD (162 aa)). Phosphoserine is present on serine 741.

Belongs to the class-V pyridoxal-phosphate-dependent aminotransferase family. MOCOS subfamily. It depends on pyridoxal 5'-phosphate as a cofactor.

The enzyme catalyses Mo-molybdopterin + L-cysteine + AH2 = thio-Mo-molybdopterin + L-alanine + A + H2O. Its pathway is cofactor biosynthesis; molybdopterin biosynthesis. In terms of biological role, sulfurates the molybdenum cofactor. Sulfation of molybdenum is essential for xanthine dehydrogenase (XDH) and aldehyde oxidase (ADO) enzymes in which molybdenum cofactor is liganded by 1 oxygen and 1 sulfur atom in active form. The sequence is that of Molybdenum cofactor sulfurase from Drosophila willistoni (Fruit fly).